The chain runs to 284 residues: Putative pyrophosphorylase ModD (284 aa).

Belongs to the NadC/ModD family.

This Escherichia coli O6:H1 (strain CFT073 / ATCC 700928 / UPEC) protein is Putative pyrophosphorylase ModD (modD).